The primary structure comprises 499 residues: Pentatricopeptide repeat-containing protein At5g61800 (499 aa).

PPR repeat units follow at residues 78-113 (STFCFNTIIRICTLHEPSSLSSKRFFVEMRRRSVPP), 114-150 (DFHTFPFVFKACAAKKNGDLTLVKTLHCQALRFGLLS), 151-181 (DLFTLNTLIRVYSLIAPIDSALQLFDENPQR), 182-212 (DVVTYNVLIDGLVKAREIVRARELFDSMPLR), 213-247 (DLVSWNSLISGYAQMNHCREAIKLFDEMVALGLKP), 248-282 (DNVAIVSTLSACAQSGDWQKGKAIHDYTKRKRLFI), 283-313 (DSFLATGLVDFYAKCGFIDTAMEIFELCSDK), 314-348 (TLFTWNAMITGLAMHGNGELTVDYFRKMVSSGIKP), 349-379 (DGVTFISVLVGCSHSGLVDEARNLFDQMRSL), and 385-419 (EMKHYGCMADLLGRAGLIEEAAEMIEQMPKDGGNR). Positions 424 to 499 (AWSGLLGGCR…KNVGFSKVLS (76 aa)) are type E motif.

This sequence belongs to the PPR family. PCMP-E subfamily.

In Arabidopsis thaliana (Mouse-ear cress), this protein is Pentatricopeptide repeat-containing protein At5g61800 (PCMP-E8).